A 363-amino-acid polypeptide reads, in one-letter code: MKGNSTLATTSKNITSGLHFGLVNISGNNESTLNCSQKPSDKHLDAIPILYYIIFVIGFLVNIVVVTLFCCQKGPKKVSSIYIFNLAVADLLLLATLPLWATYYSYRYDWLFGPVMCKVFGSFLTLNMFASIFFITCMSVDRYQSVIYPFLSQRRNPWQASYIVPLVWCMACLSSLPTFYFRDVRTIEYLGVNACIMAFPPEKYAQWSAGIALMKNILGFIIPLIFIATCYFGIRKHLLKTNSYGKNRITRDQVLKMAAAVVLAFIICWLPFHVLTFLDALAWMGVINSCEVIAVIDLALPFAILLGFTNSCVNPFLYCFVGNRFQQKLRSVFRVPITWLQGKRESMSCRKSSSLREMETFVS.

The Extracellular segment spans residues 1-45 (MKGNSTLATTSKNITSGLHFGLVNISGNNESTLNCSQKPSDKHLD). N-linked (GlcNAc...) asparagine glycosylation is found at Asn4, Asn13, Asn24, Asn29, and Asn34. Cystine bridges form between Cys35–Cys290 and Cys117–Cys195. The helical transmembrane segment at 46–70 (AIPILYYIIFVIGFLVNIVVVTLFC) threads the bilayer. Over 71–80 (CQKGPKKVSS) the chain is Cytoplasmic. A helical transmembrane segment spans residues 81–104 (IYIFNLAVADLLLLATLPLWATYY). Residues Tyr103 and Tyr104 each contribute to the angiotensin II site. The Extracellular segment spans residues 105-114 (SYRYDWLFGP). The chain crosses the membrane as a helical span at residues 115 to 140 (VMCKVFGSFLTLNMFASIFFITCMSV). Residues 141 to 159 (DRYQSVIYPFLSQRRNPWQ) lie on the Cytoplasmic side of the membrane. A helical membrane pass occupies residues 160 to 181 (ASYIVPLVWCMACLSSLPTFYF). 3 residues coordinate angiotensin II: Arg182, Tyr204, and Lys215. Over 182-206 (RDVRTIEYLGVNACIMAFPPEKYAQ) the chain is Extracellular. The helical transmembrane segment at 207-232 (WSAGIALMKNILGFIIPLIFIATCYF) threads the bilayer. Topologically, residues 233 to 257 (GIRKHLLKTNSYGKNRITRDQVLKM) are cytoplasmic. Residues 258-281 (AAAVVLAFIICWLPFHVLTFLDAL) form a helical membrane-spanning segment. Asp279 contributes to the angiotensin II binding site. Residues 282-294 (AWMGVINSCEVIA) are Extracellular-facing. The helical transmembrane segment at 295–320 (VIDLALPFAILLGFTNSCVNPFLYCF) threads the bilayer. Asp297 is an angiotensin II binding site. The Cytoplasmic segment spans residues 321–363 (VGNRFQQKLRSVFRVPITWLQGKRESMSCRKSSSLREMETFVS). The helix VIII stretch occupies residues 324–333 (RFQQKLRSVF).

Belongs to the G-protein coupled receptor 1 family. Interacts with MTUS1. In adult, highly expressed in myometrium with lower levels in adrenal gland and fallopian tube. Expressed in the cerebellum. Very highly expressed in fetal kidney and intestine.

The protein localises to the cell membrane. Its function is as follows. Receptor for angiotensin II, a vasoconstricting peptide. Signals primarily via a non-canonical G-protein- and beta-arrestin independent pathways. Cooperates with MTUS1 to inhibit ERK2 activation and cell proliferation. The polypeptide is Type-2 angiotensin II receptor (Homo sapiens (Human)).